The following is a 453-amino-acid chain: Bifunctional protein GlmU (453 aa).

Residues 1 to 225 (MNIVILAAGT…DWETLGVNSK (225 aa)) are pyrophosphorylase. UDP-N-acetyl-alpha-D-glucosamine is bound by residues 6–9 (LAAG), K20, Q71, 76–77 (GT), 98–100 (YGD), G135, E150, N165, and N223. D100 contributes to the Mg(2+) binding site. N223 serves as a coordination point for Mg(2+). A linker region spans residues 226–246 (AQLAELERIHQRNVADALLVE). Positions 247-453 (GVTLADPARV…GYVRPVKKKS (207 aa)) are N-acetyltransferase. R329 and K347 together coordinate UDP-N-acetyl-alpha-D-glucosamine. The Proton acceptor role is filled by H359. UDP-N-acetyl-alpha-D-glucosamine-binding residues include Y362 and N373. Residues A376, 382–383 (NY), S401, and A419 contribute to the acetyl-CoA site.

This sequence in the N-terminal section; belongs to the N-acetylglucosamine-1-phosphate uridyltransferase family. The protein in the C-terminal section; belongs to the transferase hexapeptide repeat family. In terms of assembly, homotrimer. It depends on Mg(2+) as a cofactor.

The protein localises to the cytoplasm. The enzyme catalyses alpha-D-glucosamine 1-phosphate + acetyl-CoA = N-acetyl-alpha-D-glucosamine 1-phosphate + CoA + H(+). It catalyses the reaction N-acetyl-alpha-D-glucosamine 1-phosphate + UTP + H(+) = UDP-N-acetyl-alpha-D-glucosamine + diphosphate. The protein operates within nucleotide-sugar biosynthesis; UDP-N-acetyl-alpha-D-glucosamine biosynthesis; N-acetyl-alpha-D-glucosamine 1-phosphate from alpha-D-glucosamine 6-phosphate (route II): step 2/2. Its pathway is nucleotide-sugar biosynthesis; UDP-N-acetyl-alpha-D-glucosamine biosynthesis; UDP-N-acetyl-alpha-D-glucosamine from N-acetyl-alpha-D-glucosamine 1-phosphate: step 1/1. It functions in the pathway bacterial outer membrane biogenesis; LPS lipid A biosynthesis. Catalyzes the last two sequential reactions in the de novo biosynthetic pathway for UDP-N-acetylglucosamine (UDP-GlcNAc). The C-terminal domain catalyzes the transfer of acetyl group from acetyl coenzyme A to glucosamine-1-phosphate (GlcN-1-P) to produce N-acetylglucosamine-1-phosphate (GlcNAc-1-P), which is converted into UDP-GlcNAc by the transfer of uridine 5-monophosphate (from uridine 5-triphosphate), a reaction catalyzed by the N-terminal domain. The chain is Bifunctional protein GlmU from Burkholderia vietnamiensis (strain G4 / LMG 22486) (Burkholderia cepacia (strain R1808)).